A 272-amino-acid chain; its full sequence is Phosphatidylglycerol--prolipoprotein diacylglyceryl transferase (272 aa).

Helical transmembrane passes span 15–35 (LGPLYVHMYSVFMLAGALVLF), 53–73 (AFAVTSLLIPVILGARLWHVV), 94–114 (GLGFIGGVFSGLICFFVIAKI), and 117–137 (VPPFTFLDALAPGILVALCFA). Arginine 138 provides a ligand contact to a 1,2-diacyl-sn-glycero-3-phospho-(1'-sn-glycerol). Transmembrane regions (helical) follow at residues 174–194 (FHPIFLYEIILNVFIIVILLV), 199–219 (VFVKTVFPKGSVFAAFLVLYG), and 237–257 (FGLDLNYVGAAAMIIVGVLIA).

Belongs to the Lgt family.

Its subcellular location is the cell membrane. The catalysed reaction is L-cysteinyl-[prolipoprotein] + a 1,2-diacyl-sn-glycero-3-phospho-(1'-sn-glycerol) = an S-1,2-diacyl-sn-glyceryl-L-cysteinyl-[prolipoprotein] + sn-glycerol 1-phosphate + H(+). It functions in the pathway protein modification; lipoprotein biosynthesis (diacylglyceryl transfer). In terms of biological role, catalyzes the transfer of the diacylglyceryl group from phosphatidylglycerol to the sulfhydryl group of the N-terminal cysteine of a prolipoprotein, the first step in the formation of mature lipoproteins. The chain is Phosphatidylglycerol--prolipoprotein diacylglyceryl transferase from Tropheryma whipplei (strain TW08/27) (Whipple's bacillus).